The chain runs to 131 residues: Interleukin-13 (131 aa).

The signal sequence occupies residues 1 to 18; it reads MALWVTAVLALACLGGLA. Residues asparagine 42, asparagine 52, and asparagine 75 are each glycosylated (N-linked (GlcNAc...) asparagine). Cystine bridges form between cysteine 51/cysteine 79 and cysteine 67/cysteine 93.

This sequence belongs to the IL-4/IL-13 family. In terms of assembly, interacts with IL13RA2.

The protein localises to the secreted. In terms of biological role, cytokine that plays important roles in allergic inflammation and immune response to parasite infection. Synergizes with IL2 in regulating interferon-gamma synthesis. Stimulates B-cell proliferation, and activation of eosinophils, basophils, and mast cells. Plays an important role in controlling IL33 activity by modulating the production of transmembrane and soluble forms of interleukin-1 receptor-like 1/IL1RL1. Displays the capacity to antagonize Th1-driven proinflammatory immune response and downregulates synthesis of many proinflammatory cytokines including IL1, IL6, IL10, IL12 and TNF-alpha through a mechanism that partially involves suppression of NF-kappa-B. Also functions on nonhematopoietic cells, including endothelial cells where it induces vascular cell adhesion protein 1/VCAM1, which is important in the recruitment of eosinophils. Exerts its biological effects through its receptors which comprises the IL4R chain and the IL13RA1 chain, to activate JAK1 and TYK2, leading to the activation of STAT6. Aside from IL13RA1, another receptor IL13RA2 acts as a high affinity decoy for IL13 and mediates internalization and depletion of extracellular IL13. In Mus musculus (Mouse), this protein is Interleukin-13 (Il13).